The sequence spans 492 residues: uncharacterized protein (492 aa).

This sequence belongs to the FGGY kinase family.

This is an uncharacterized protein from Archaeoglobus fulgidus (strain ATCC 49558 / DSM 4304 / JCM 9628 / NBRC 100126 / VC-16).